We begin with the raw amino-acid sequence, 508 residues long: Lysine--tRNA ligase (508 aa).

Positions 418 and 425 each coordinate Mg(2+).

It belongs to the class-II aminoacyl-tRNA synthetase family. In terms of assembly, homodimer. The cofactor is Mg(2+).

It is found in the cytoplasm. It carries out the reaction tRNA(Lys) + L-lysine + ATP = L-lysyl-tRNA(Lys) + AMP + diphosphate. This is Lysine--tRNA ligase from Burkholderia thailandensis (strain ATCC 700388 / DSM 13276 / CCUG 48851 / CIP 106301 / E264).